Consider the following 121-residue polypeptide: UPF0738 protein BLi01253/BL05110 (121 aa).

The protein belongs to the UPF0738 family.

The chain is UPF0738 protein BLi01253/BL05110 from Bacillus licheniformis (strain ATCC 14580 / DSM 13 / JCM 2505 / CCUG 7422 / NBRC 12200 / NCIMB 9375 / NCTC 10341 / NRRL NRS-1264 / Gibson 46).